A 151-amino-acid chain; its full sequence is Large ribosomal subunit protein bL9 (151 aa).

The protein belongs to the bacterial ribosomal protein bL9 family.

Its function is as follows. Binds to the 23S rRNA. The chain is Large ribosomal subunit protein bL9 from Lactobacillus delbrueckii subsp. bulgaricus (strain ATCC 11842 / DSM 20081 / BCRC 10696 / JCM 1002 / NBRC 13953 / NCIMB 11778 / NCTC 12712 / WDCM 00102 / Lb 14).